Reading from the N-terminus, the 651-residue chain is MRYLITTALAYTNGPLHLGHARSTYIPADIIYKYLKLRGEDVIHVGGTDNHGVPITLTAEKEGKSPEEIVEKYHNEIKEDLDLLGVEFDAFGKTHSQIHIETAQEFYLKLKENGYIYEKEIEQFYCPNCKKFLPDRYVEGICPYCGGEARGDHCEVCGRHLEPFELKDPYCVICKGKPEIRKTKHHFFKLSALKKELEEYIKNAKEMPEHVKNMALNWIKELHDWDISRDISWGVPIPGTNQVMYVWLEAPIGYISFTKMLGEIWKKYWLEKDTKIYHFIGKDITVHHAVFWPGMLIAHGSFNLPTAVVSGGYLTLEGRKMSTSKRWVVWVKDFVKNFDADYLRYYLIMSAPLFKDCDFSFDDFKNKINNELINIIGNFTHRVLTFTHRKFKKVPIVDEDRLKEEDKELLKKCEETLEAVDKNIRSFKFRDALVNILHLAIEGNSYFQKMEPWAVDDEERLKEILYTCCKTVKTLVYLLYPYMPKKSLALLELMNEELDLELRGNELKKPKIIFKKIDNKKIEEMKKKLYENKKEETKGGEKMEQIDISYLEKIDLRVGEVVEAEDIPKSKKLLKLMVDLGDEKRQIVSGIKGYYKPEDLVGKKVIVICNLKPAKLCGVLSEGMILAAEDDEGNVSLLTVDKDIKAGSKVR.

Residues alanine 10–histidine 20 carry the 'HIGH' region motif. Zn(2+) is bound by residues cysteine 142, cysteine 145, cysteine 154, and cysteine 157. A 'KMSKS' region motif is present at residues lysine 320–serine 324. Threonine 323 is a binding site for ATP. Residues tyrosine 550–arginine 651 enclose the tRNA-binding domain.

This sequence belongs to the class-I aminoacyl-tRNA synthetase family. MetG type 1 subfamily. As to quaternary structure, homodimer. Zn(2+) serves as cofactor.

It localises to the cytoplasm. It carries out the reaction tRNA(Met) + L-methionine + ATP = L-methionyl-tRNA(Met) + AMP + diphosphate. Its function is as follows. Is required not only for elongation of protein synthesis but also for the initiation of all mRNA translation through initiator tRNA(fMet) aminoacylation. This is Methionine--tRNA ligase from Methanocaldococcus jannaschii (strain ATCC 43067 / DSM 2661 / JAL-1 / JCM 10045 / NBRC 100440) (Methanococcus jannaschii).